Reading from the N-terminus, the 339-residue chain is Methyltransferase ptaI (339 aa).

Belongs to the methyltransferase superfamily.

It functions in the pathway secondary metabolite biosynthesis. In terms of biological role, methyltransferase; part of the gene cluster that mediates the biosynthesis of pestheic acid, a diphenyl ether which is a biosynthetic precursor of the unique chloropupukeananes. The biosynthesis initiates from condensation of acetate and malonate units catalyzed by the non-reducing PKS ptaA. As the ptaA protein is TE/CLC domain-deficient, hydrolysis and Claisen cyclization of the polyketide could be catalyzed by ptaB containing a beta-lactamase domain. The ptaB protein might hydrolyze the thioester bond between the ACP of ptaA and the intermediate to release atrochrysone carboxylic acid, which is spontaneously dehydrated to form endocrocin anthrone. Endocrocin anthrone is then converted to endocrocin, catalyzed by the anthrone oxygenase ptaC. Spontaneous decarboxylation of endocrocin occurs to generate emodin. An O-methyltransferase (ptaH or ptaI) could methylate emodin to form physcion. PtaJ could then catalyze the oxidative cleavage of physcion, and rotation of the intermediate could then afford desmethylisosulochrin. PtaF, a putative NADH-dependent oxidoreductase, might also participate in the oxidative cleavage step. Desmethylisosulochrin is then transformed by another O-methyltransferase (ptaH or ptaI) to form isosulochrin. Chlorination of isosulochrin by ptaM in the cyclohexadienone B ring then produces chloroisosulochrin. PtaE is responsible for the oxidative coupling reactions of both benzophenones isosulouchrin and chloroisosulochrin to RES-1214-1 and pestheic acid respectively, regardless of chlorination. The protein is Methyltransferase ptaI of Pestalotiopsis fici (strain W106-1 / CGMCC3.15140).